The following is a 526-amino-acid chain: Cytochrome P450 52A5 (526 aa).

Residues 18 to 38 (WYVIVPLAIIIYKVFDYFYVL) form a helical membrane-spanning segment. Cys-473 is a binding site for heme.

This sequence belongs to the cytochrome P450 family. The cofactor is heme.

The protein resides in the membrane. Functionally, together with an NADPH cytochrome P450 the enzyme system catalyzes the terminal hydroxylation as the first step in the assimilation of alkanes and fatty acids. The polypeptide is Cytochrome P450 52A5 (CYP52A5) (Candida maltosa (Yeast)).